The sequence spans 400 residues: GDNF family receptor alpha-3 (400 aa).

Positions 1–31 (MVRPLNPRPLPPVVLMLLLLLPPSPLPLAAG) are cleaved as a signal peptide. A disulfide bridge links Cys51 with Cys57. 2 N-linked (GlcNAc...) asparagine glycosylation sites follow: Asn95 and Asn148. Intrachain disulfides connect Cys162–Cys218, Cys169–Cys175, Cys186–Cys196, Cys191–Cys239, Cys220–Cys227, Cys248–Cys316, Cys255–Cys261, Cys272–Cys288, Cys281–Cys340, and Cys318–Cys328. A glycan (N-linked (GlcNAc...) asparagine) is linked at Asn309. The GPI-anchor amidated asparagine moiety is linked to residue Asn374. The propeptide at 375 to 400 (PAVRPQPWVPSLFSCTLPLILLLSLW) is removed in mature form.

Belongs to the GDNFR family. In terms of assembly, interacts with ARTN ligand and RET: forms a 2:2:2 ternary complex composed of ARTN ligand, GFRA3 and RET receptor. Interacts with SORL1. In terms of processing, N-glycosylated. In terms of tissue distribution, widely expressed in adult and fetus which exhibit a similar pattern. Essentially not expressed in the central nervous system, but highly expressed in several sensory and sympathetic ganglia of the peripheral nervous system. Moderate expression in many non-neuronal tissues, particularly those of the digestive and urogenital systems, but high expression in stomach and appendix. Several types of glandular tissues show low expression. Very low or no expression detected in the hematopoietic system.

Its subcellular location is the cell membrane. In terms of biological role, receptor for artemin (ARTN), a growth factor that supports the survival of sensory and sympathetic peripheral neurons. ARTN-binding leads to autophosphorylation and activation of the RET receptor. This is GDNF family receptor alpha-3 (GFRA3) from Homo sapiens (Human).